The primary structure comprises 398 residues: 1-deoxy-D-xylulose 5-phosphate reductoisomerase (398 aa).

NADPH contacts are provided by T11, G12, S13, I14, and N125. A 1-deoxy-D-xylulose 5-phosphate-binding site is contributed by K126. Residue E127 coordinates NADPH. Position 151 (D151) interacts with Mn(2+). Residues S152, E153, S186, and H209 each contribute to the 1-deoxy-D-xylulose 5-phosphate site. E153 contributes to the Mn(2+) binding site. G215 contacts NADPH. Positions 222, 227, 228, and 231 each coordinate 1-deoxy-D-xylulose 5-phosphate. Position 231 (E231) interacts with Mn(2+).

The protein belongs to the DXR family. Requires Mg(2+) as cofactor. Mn(2+) is required as a cofactor.

It carries out the reaction 2-C-methyl-D-erythritol 4-phosphate + NADP(+) = 1-deoxy-D-xylulose 5-phosphate + NADPH + H(+). The protein operates within isoprenoid biosynthesis; isopentenyl diphosphate biosynthesis via DXP pathway; isopentenyl diphosphate from 1-deoxy-D-xylulose 5-phosphate: step 1/6. In terms of biological role, catalyzes the NADPH-dependent rearrangement and reduction of 1-deoxy-D-xylulose-5-phosphate (DXP) to 2-C-methyl-D-erythritol 4-phosphate (MEP). The chain is 1-deoxy-D-xylulose 5-phosphate reductoisomerase from Acinetobacter baumannii (strain ACICU).